Consider the following 419-residue polypeptide: CinA-like protein (419 aa).

The protein belongs to the CinA family.

The sequence is that of CinA-like protein from Picosynechococcus sp. (strain ATCC 27264 / PCC 7002 / PR-6) (Agmenellum quadruplicatum).